Consider the following 169-residue polypeptide: Succinate dehydrogenase cytochrome b560 subunit, mitochondrial (169 aa).

The transit peptide at 1 to 29 (MAALLLRHVGRHCLRAHLSPQLCIRNAVP) directs the protein to the mitochondrion. Topologically, residues 30–62 (LGTTAKEEMERFWNKNLGSNRPLSPHITIYRWS) are mitochondrial matrix. Residues 63 to 92 (LPMAMSICHRGTGIALSAGVSLFGLSALLL) traverse the membrane as a helical segment. The Mitochondrial intermembrane portion of the chain corresponds to 93 to 112 (PGNFESHLELVKSLCLGPTL). A helical membrane pass occupies residues 113 to 137 (IYTAKFGIVFPLMYHTWNGIRHLIW). Position 127 (His127) interacts with heme b. Topologically, residues 138–144 (DLGKGLT) are mitochondrial matrix. Residues 145 to 166 (IPQLTQSGVVVLILTVLSSVGL) form a helical membrane-spanning segment. The Mitochondrial intermembrane segment spans residues 167 to 169 (AAM).

Belongs to the cytochrome b560 family. In terms of assembly, component of complex II composed of four subunits: the flavoprotein (FP) SDHA, iron-sulfur protein (IP) SDHB, and a cytochrome b560 composed of SDHC and SDHD. Heme b serves as cofactor. In terms of tissue distribution, detected in heart muscle (at protein level).

It is found in the mitochondrion inner membrane. It functions in the pathway carbohydrate metabolism; tricarboxylic acid cycle. Membrane-anchoring subunit of succinate dehydrogenase (SDH) that is involved in complex II of the mitochondrial electron transport chain and is responsible for transferring electrons from succinate to ubiquinone (coenzyme Q). SDH also oxidizes malate to the non-canonical enol form of oxaloacetate, enol-oxaloacetate. Enol-oxaloacetate, which is a potent inhibitor of the succinate dehydrogenase activity, is further isomerized into keto-oxaloacetate. The polypeptide is Succinate dehydrogenase cytochrome b560 subunit, mitochondrial (SDHC) (Sus scrofa (Pig)).